Consider the following 224-residue polypeptide: Protein-L-isoaspartate O-methyltransferase (224 aa).

S63 is an active-site residue.

This sequence belongs to the methyltransferase superfamily. L-isoaspartyl/D-aspartyl protein methyltransferase family.

Its subcellular location is the cytoplasm. The enzyme catalyses [protein]-L-isoaspartate + S-adenosyl-L-methionine = [protein]-L-isoaspartate alpha-methyl ester + S-adenosyl-L-homocysteine. In terms of biological role, catalyzes the methyl esterification of L-isoaspartyl residues in peptides and proteins that result from spontaneous decomposition of normal L-aspartyl and L-asparaginyl residues. It plays a role in the repair and/or degradation of damaged proteins. The protein is Protein-L-isoaspartate O-methyltransferase of Herpetosiphon aurantiacus (strain ATCC 23779 / DSM 785 / 114-95).